The following is a 432-amino-acid chain: Isocitrate lyase (432 aa).

The interval 1 to 24 (MSNVGKPRTAQEIQQDWDTNPRWN) is disordered. Polar residues predominate over residues 11-22 (QEIQQDWDTNPR). A substrate-binding site is contributed by 93–95 (SGW). Aspartate 155 provides a ligand contact to Mg(2+). Cysteine 193 acts as the Proton acceptor in catalysis. Residues 194–195 (GH), arginine 230, 315–319 (NCSPS), and threonine 349 contribute to the substrate site.

It belongs to the isocitrate lyase/PEP mutase superfamily. Isocitrate lyase family. Homotetramer. Mg(2+) serves as cofactor.

The catalysed reaction is D-threo-isocitrate = glyoxylate + succinate. Its pathway is carbohydrate metabolism; glyoxylate cycle; (S)-malate from isocitrate: step 1/2. Its activity is regulated as follows. Inhibited by 3-phosphoglycerate, 6-phosphogluconate, phosphoenolpyruvate (PEP), fructose 1,6-bisphosphate, glycolate, oxalate, and itaconate. Functionally, involved in the metabolic adaptation in response to environmental changes. Catalyzes the reversible formation of succinate and glyoxylate from isocitrate, a key step of the glyoxylate cycle, which operates as an anaplerotic route for replenishing the tricarboxylic acid cycle during growth on fatty acid substrates. This is Isocitrate lyase from Corynebacterium glutamicum (strain ATCC 13032 / DSM 20300 / JCM 1318 / BCRC 11384 / CCUG 27702 / LMG 3730 / NBRC 12168 / NCIMB 10025 / NRRL B-2784 / 534).